The following is a 214-amino-acid chain: MPKLPAVGIDLGTTYSCVGVFQHGKVEIIANDQGNRTTPSYVAFTESERLIGDAAKNQVAMNPNNTIFDAKRLIGRRFDDATVQSDMKHWPFEAFAENGKPRIRGTFDVSVLTIEDGFEVKATAGDTHLGREDFDNRLVNHLVQEFQRKHGKDLGQNKRALRRLRTACERAKRTLSSSTQASIEIDSLFEGVDFYTSVTRARFEELNGDLFRGT.

This sequence belongs to the heat shock protein 70 family.

This chain is Heat shock 70 kDa protein cognate 1 (Hsc70-1), found in Drosophila simulans (Fruit fly).